We begin with the raw amino-acid sequence, 814 residues long: DNA gyrase subunit A (814 aa).

Residues L32–L499 enclose the Topo IIA-type catalytic domain. Residue Y120 is the O-(5'-phospho-DNA)-tyrosine intermediate of the active site. The short motif at Q526–G532 is the GyrA-box element.

Belongs to the type II topoisomerase GyrA/ParC subunit family. As to quaternary structure, heterotetramer, composed of two GyrA and two GyrB chains. In the heterotetramer, GyrA contains the active site tyrosine that forms a transient covalent intermediate with DNA, while GyrB binds cofactors and catalyzes ATP hydrolysis.

Its subcellular location is the cytoplasm. The catalysed reaction is ATP-dependent breakage, passage and rejoining of double-stranded DNA.. A type II topoisomerase that negatively supercoils closed circular double-stranded (ds) DNA in an ATP-dependent manner to modulate DNA topology and maintain chromosomes in an underwound state. Negative supercoiling favors strand separation, and DNA replication, transcription, recombination and repair, all of which involve strand separation. Also able to catalyze the interconversion of other topological isomers of dsDNA rings, including catenanes and knotted rings. Type II topoisomerases break and join 2 DNA strands simultaneously in an ATP-dependent manner. This chain is DNA gyrase subunit A, found in Dehalogenimonas lykanthroporepellens (strain ATCC BAA-1523 / JCM 15061 / BL-DC-9).